The sequence spans 132 residues: Large ribosomal subunit protein bL12 (132 aa).

Over residues 102 to 126 (APKPIKEATNKDDAESIKKQLEEAG) the composition is skewed to basic and acidic residues. Positions 102–132 (APKPIKEATNKDDAESIKKQLEEAGAKASVK) are disordered.

This sequence belongs to the bacterial ribosomal protein bL12 family. Homodimer. Part of the ribosomal stalk of the 50S ribosomal subunit. Forms a multimeric L10(L12)X complex, where L10 forms an elongated spine to which 2 to 4 L12 dimers bind in a sequential fashion. Binds GTP-bound translation factors.

Functionally, forms part of the ribosomal stalk which helps the ribosome interact with GTP-bound translation factors. Is thus essential for accurate translation. The protein is Large ribosomal subunit protein bL12 of Rippkaea orientalis (strain PCC 8801 / RF-1) (Cyanothece sp. (strain PCC 8801)).